Consider the following 447-residue polypeptide: Probable ribosomal RNA small subunit methyltransferase B (447 aa).

S-adenosyl-L-methionine-binding positions include 259–265 (CAAPGGK), Asp283, Asp310, and Asp329. Residue Cys382 is the Nucleophile of the active site.

It belongs to the class I-like SAM-binding methyltransferase superfamily. RsmB/NOP family.

The protein localises to the cytoplasm. The catalysed reaction is cytidine(967) in 16S rRNA + S-adenosyl-L-methionine = 5-methylcytidine(967) in 16S rRNA + S-adenosyl-L-homocysteine + H(+). In terms of biological role, specifically methylates the cytosine at position 967 (m5C967) of 16S rRNA. This chain is Probable ribosomal RNA small subunit methyltransferase B, found in Bacillus subtilis (strain 168).